The primary structure comprises 719 residues: Polyribonucleotide nucleotidyltransferase (719 aa).

D507 and D513 together coordinate Mg(2+). Residues 573–633 (PKLELFSVDP…EQIKAAKDYI (61 aa)) form the KH domain. Residues 658–719 (GQEFQGIVKK…NGKISVDLCE (62 aa)) enclose the S1 motif domain.

The protein belongs to the polyribonucleotide nucleotidyltransferase family. It depends on Mg(2+) as a cofactor.

It localises to the cytoplasm. The catalysed reaction is RNA(n+1) + phosphate = RNA(n) + a ribonucleoside 5'-diphosphate. Its function is as follows. Involved in mRNA degradation. Catalyzes the phosphorolysis of single-stranded polyribonucleotides processively in the 3'- to 5'-direction. In Campylobacter jejuni (strain RM1221), this protein is Polyribonucleotide nucleotidyltransferase.